Reading from the N-terminus, the 202-residue chain is NADH dehydrogenase [ubiquinone] iron-sulfur protein 7, mitochondrial (202 aa).

The N-terminal 56 residues, 1–56 (MLRRTSFNFTGRAMISRGSPEWSHRLDLKKGKKTTMMHKLGTSKPNNALQYAQMTL), are a transit peptide targeting the mitochondrion. The [4Fe-4S] cluster site is built by C77, C78, C142, and C172.

The protein belongs to the complex I 20 kDa subunit family. In terms of assembly, complex I is composed of 45 different subunits This is a component of the iron-sulfur (IP) fragment of the enzyme. The cofactor is [4Fe-4S] cluster.

The protein localises to the mitochondrion. The catalysed reaction is a ubiquinone + NADH + 5 H(+)(in) = a ubiquinol + NAD(+) + 4 H(+)(out). In terms of biological role, core subunit of the mitochondrial membrane respiratory chain NADH dehydrogenase (Complex I) that is believed to belong to the minimal assembly required for catalysis. Complex I functions in the transfer of electrons from NADH to the respiratory chain. The immediate electron acceptor for the enzyme is believed to be ubiquinone. This Trypanosoma brucei brucei protein is NADH dehydrogenase [ubiquinone] iron-sulfur protein 7, mitochondrial (NDHK).